The primary structure comprises 297 residues: tRNA dimethylallyltransferase (297 aa).

An ATP-binding site is contributed by 15–22 (GPTASGKS). 17-22 (TASGKS) is a binding site for substrate. Interaction with substrate tRNA regions lie at residues 40–43 (DSMQ) and 164–168 (QRIVR).

It belongs to the IPP transferase family. In terms of assembly, monomer. Requires Mg(2+) as cofactor.

It carries out the reaction adenosine(37) in tRNA + dimethylallyl diphosphate = N(6)-dimethylallyladenosine(37) in tRNA + diphosphate. Catalyzes the transfer of a dimethylallyl group onto the adenine at position 37 in tRNAs that read codons beginning with uridine, leading to the formation of N6-(dimethylallyl)adenosine (i(6)A). This is tRNA dimethylallyltransferase from Rhizobium johnstonii (strain DSM 114642 / LMG 32736 / 3841) (Rhizobium leguminosarum bv. viciae).